The sequence spans 370 residues: Phospho-N-acetylmuramoyl-pentapeptide-transferase (370 aa).

The next 10 membrane-spanning stretches (helical) occupy residues 3 to 23 (QIIIAGAVSFLVAIFTTPVLI), 54 to 74 (GLAILAGILVAYVVAGLYGLL), 79 to 99 (AFTASGLLVLGLTLGLGAVGF), 118 to 138 (AKLISQLVLALLFGFLVLRFP), 161 to 181 (LAVGGTVIGTIVFLIFMYILI), 197 to 217 (LAAGVTAIVMGSYSLMTFWQF), 238 to 258 (LAVLAAAGLGGCLGFLWWNAA), 262 to 282 (IFMGDTGSLALGGLVAGISVT), 290 to 310 (IIIGALFVIETVSVVIQIVVF), and 341 to 361 (FWLLAAMAAMAGVAIFYGDWL).

It belongs to the glycosyltransferase 4 family. MraY subfamily. It depends on Mg(2+) as a cofactor.

The protein resides in the cell membrane. The enzyme catalyses UDP-N-acetyl-alpha-D-muramoyl-L-alanyl-gamma-D-glutamyl-meso-2,6-diaminopimeloyl-D-alanyl-D-alanine + di-trans,octa-cis-undecaprenyl phosphate = di-trans,octa-cis-undecaprenyl diphospho-N-acetyl-alpha-D-muramoyl-L-alanyl-D-glutamyl-meso-2,6-diaminopimeloyl-D-alanyl-D-alanine + UMP. The protein operates within cell wall biogenesis; peptidoglycan biosynthesis. Catalyzes the initial step of the lipid cycle reactions in the biosynthesis of the cell wall peptidoglycan: transfers peptidoglycan precursor phospho-MurNAc-pentapeptide from UDP-MurNAc-pentapeptide onto the lipid carrier undecaprenyl phosphate, yielding undecaprenyl-pyrophosphoryl-MurNAc-pentapeptide, known as lipid I. This is Phospho-N-acetylmuramoyl-pentapeptide-transferase from Corynebacterium aurimucosum (strain ATCC 700975 / DSM 44827 / CIP 107346 / CN-1) (Corynebacterium nigricans).